A 479-amino-acid polypeptide reads, in one-letter code: Envelope glycoprotein C homolog (479 aa).

Residues 1–22 (MASLARAMLALLALYAAAIAAA) form the signal peptide. At 23–451 (PSTTTALDTT…SVSWPVVSSM (429 aa)) the chain is on the virion surface side. The interval 26-96 (TTALDTTPNG…RVHGDKATAH (71 aa)) is disordered. N-linked (GlcNAc...) asparagine; by host glycosylation occurs at asparagine 40. Pro residues predominate over residues 48 to 57 (PSPPPTPAPA). Residues 75–82 (SRRKPPRN) are HDB1. Positions 75–87 (SRRKPPRNNNRTR) are enriched in basic residues. Residue asparagine 84 is glycosylated (N-linked (GlcNAc...) asparagine; by host). An HDB2 region spans residues 95–101 (AHGRKRI). A disulfide bridge links cysteine 103 with cysteine 120. The interval 135–140 (YRRGRF) is HDB3. 6 N-linked (GlcNAc...) asparagine; by host glycosylation sites follow: asparagine 169, asparagine 192, asparagine 220, asparagine 228, asparagine 285, and asparagine 302. 3 disulfides stabilise this stretch: cysteine 256–cysteine 326, cysteine 365–cysteine 418, and cysteine 369–cysteine 392. A helical transmembrane segment spans residues 452-472 (IVVIAGIGILAIVLVIMATCV). At 473–479 (YYRQAGP) the chain is on the cytoplasmic side.

It belongs to the herpesviridae glycoprotein C family. In terms of assembly, interacts with host complement component C3; this interaction inhibits host immune response by disregulating complement cascade.

Its subcellular location is the virion membrane. Essential for the initial attachment to heparan sulfate moieties of the host cell surface proteoglycans. Plays also a role in host immune evasion by inhibiting the host complement cascade activation. This Suid herpesvirus 1 (strain Indiana-Funkhauser / Becker) (SuHV-1) protein is Envelope glycoprotein C homolog (gC).